The following is a 92-amino-acid chain: 11 kDa excretory-secretory protein (92 aa).

The protein is 11 kDa excretory-secretory protein of Trichostrongylus colubriformis (Black scour worm).